We begin with the raw amino-acid sequence, 427 residues long: Glucose-6-phosphate isomerase (427 aa).

Glu-277 acts as the Proton donor in catalysis. Active-site residues include His-298 and Lys-414.

This sequence belongs to the GPI family.

Its subcellular location is the cytoplasm. It catalyses the reaction alpha-D-glucose 6-phosphate = beta-D-fructose 6-phosphate. Its pathway is carbohydrate biosynthesis; gluconeogenesis. It participates in carbohydrate degradation; glycolysis; D-glyceraldehyde 3-phosphate and glycerone phosphate from D-glucose: step 2/4. Catalyzes the reversible isomerization of glucose-6-phosphate to fructose-6-phosphate. The polypeptide is Glucose-6-phosphate isomerase (Mycoplasma mycoides subsp. mycoides SC (strain CCUG 32753 / NCTC 10114 / PG1)).